The sequence spans 132 residues: Small ribosomal subunit protein uS8 (132 aa).

This sequence belongs to the universal ribosomal protein uS8 family. As to quaternary structure, part of the 30S ribosomal subunit. Contacts proteins S5 and S12.

Its function is as follows. One of the primary rRNA binding proteins, it binds directly to 16S rRNA central domain where it helps coordinate assembly of the platform of the 30S subunit. The sequence is that of Small ribosomal subunit protein uS8 from Lactobacillus delbrueckii subsp. bulgaricus (strain ATCC BAA-365 / Lb-18).